An 87-amino-acid polypeptide reads, in one-letter code: Large ribosomal subunit protein bL31B (87 aa).

The protein belongs to the bacterial ribosomal protein bL31 family. Type B subfamily. In terms of assembly, part of the 50S ribosomal subunit.

This chain is Large ribosomal subunit protein bL31B, found in Klebsiella pneumoniae (strain 342).